The chain runs to 395 residues: MTIASSTASSEFLKNPYSFYDTLRAVHPIYKGSFLKYPGWYVTGYEETAAILKDARFKVRTPLPESSTKYQDLSHVQNQMMLFQNQPDHRRLRTLASGAFTPRTTESYQPYIIETVHHLLDQVQGKKKMEVISDFAFPLASFVIANIIGVPEEDREQLKEWAASLIQTIDFTRSRKALTEGNIMAVQAMAYFKELIQKRKRHPQQDMISMLLKGREKDKLTEEEAASTCILLAIAGHETTVNLISNSVLCLLQHPEQLLKLRENPDLIGTAVEECLRYESPTQMTARVASEDIDICGVTIRQGEQVYLLLGAANRDPSIFTNPDVFDITRSPNPHLSFGHGHHVCLGSSLARLEAQIAINTLLQRMPSLNLADFEWRYRPLFGFRALEELPVTFE.

R60 serves as a coordination point for substrate. Residue H89–R93 coordinates heme. A substrate-binding site is contributed by I169–R173. C250 and C275 are disulfide-bonded. T285–R287 lines the heme pocket. Y307 provides a ligand contact to substrate. Heme contacts are provided by residues H343–C345 and C345.

Heme serves as cofactor.

It carries out the reaction a C2-C8-saturated long-chain fatty acyl-[ACP] + 2 reduced [flavodoxin] + 3 O2 = 6-carboxyhexanoyl-[ACP] + a fatty aldehyde + 2 oxidized [flavodoxin] + 3 H2O + 3 H(+). The protein operates within cofactor biosynthesis; biotin biosynthesis. In terms of biological role, catalyzes the C-C bond cleavage of fatty acid linked to acyl carrier protein (ACP) to generate pimelic acid for biotin biosynthesis. It has high affinity for long-chain fatty acids with the greatest affinity for myristic acid. The protein is Biotin biosynthesis cytochrome P450 (bioI) of Bacillus subtilis (strain 168).